The sequence spans 604 residues: MADSKGSTSKEGLSDWCILEAECSDLENDFEQLFEQDTDSDVSDLLDNGELEQGNSLELFHQQECEQSEEQLQILKRKYLSPKAVAQLSPRLESISLSPQQKSKRRLFAEQDSGLELSLNNEAEDVSPEVEVPAIDSRPVDEGGSGAIDIDYLSLLRSSNIKATLMAKFKESFGVGFNELTRQFKSYKTCCNDWVLAVYAVHDDLFESSKQLLQQHCDYIWVRGIGAMTLYLLCFKAGKNRGTVHKLMTSMLNVQEQQILSEPPKLRNTAAALFWYKGGMGSGAFTHGTYPDWIAHQTILGHQNAEASTFDFSAMVQWAFDNNYLEEPDIAYQYAKLAPEDSNAVAWLAHNQQAKFVRECAAMVRFYKKGQMKEMSMSEWIHTKINEVEGEGHWSDIVKFLRYQDVNFITFLAAFKNFLHAVPKHNCILIYGPPNSGKSSFAMSLIKVLKGRVLSFVNSKSQFWLQPLGESKIALLDDVTDPCWVYIDTYLRNGLDGHFVSLDCKYKAPVQIKFPPLLLTSNINVHGETNYRYLHSRIKGFEFPHPFPMKPDNTPQFQLTDQSWKSFFERLWTQLDLSDQEEEGQHGESQRAFQCSARSANEHI.

The Nuclear localization signal signature appears at 76 to 78 (KRK). Residues S81 and S89 each carry the phosphoserine; by host modification. The Nuclear export signal signature appears at 88 to 97 (LSPRLESISL). Residues 144–307 (GSGAIDIDYL…TILGHQNAEA (164 aa)) are DNA-binding region. Positions 406–556 (VNFITFLAAF…FPMKPDNTPQ (151 aa)) constitute an SF3 helicase domain. 432–439 (GPPNSGKS) contributes to the ATP binding site. K513 is covalently cross-linked (Glycyl lysine isopeptide (Lys-Gly) (interchain with G-Cter in SUMO)). Residues 579–604 (DQEEEGQHGESQRAFQCSARSANEHI) are disordered. Residues 591–604 (RAFQCSARSANEHI) show a composition bias toward polar residues.

The protein belongs to the papillomaviridae E1 protein family. Can form hexamers. Interacts with E2 protein; this interaction increases E1 DNA binding specificity. Interacts with host DNA polymerase subunit POLA2. Interacts with host single stranded DNA-binding protein RPA1. Interacts with host TOP1; this interaction stimulates the enzymatic activity of TOP1. Phosphorylated. In terms of processing, sumoylated.

The protein resides in the host nucleus. The enzyme catalyses Couples ATP hydrolysis with the unwinding of duplex DNA by translocating in the 3'-5' direction.. It catalyses the reaction ATP + H2O = ADP + phosphate + H(+). ATP-dependent DNA 3'-5' helicase required for initiation of viral DNA replication. It forms a complex with the viral E2 protein. The E1-E2 complex binds to the replication origin which contains binding sites for both proteins. During the initial step, a dimer of E1 interacts with a dimer of protein E2 leading to a complex that binds the viral origin of replication with high specificity. Then, a second dimer of E1 displaces the E2 dimer in an ATP-dependent manner to form the E1 tetramer. Following this, two E1 monomers are added to each half of the site, which results in the formation of two E1 trimers on the viral ori. Subsequently, two hexamers will be created. The double hexamer acts as a bi-directional helicase machinery and unwinds the viral DNA and then recruits the host DNA polymerase to start replication. This Human papillomavirus 12 protein is Replication protein E1.